A 283-amino-acid chain; its full sequence is 2-heptyl-4(1H)-quinolone synthase subunit PqsB (283 aa).

Belongs to the thiolase-like superfamily. FabH family. In terms of assembly, forms a tight complex with PqsC.

The protein localises to the cytoplasm. With respect to regulation, activity of the complex is inhibited by 2-aminoacetophenone (2-AA). Required for the biosynthesis of the quorum-sensing signaling molecules 2-heptyl-4(1H)-quinolone (HHQ) and 2-heptyl-3-hydroxy-4(1H)-quinolone (Pseudomonas quinolone signal or PQS), which are important for biofilm formation and virulence. The PqsC/PqsB complex catalyzes the condensation of 2-aminobenzoylacetate (2-ABA) and octanoyl-CoA to form HHQ. PqsB, together with PqsC, catalyzes the coupling of 2-ABA with the octanoate group, leading to decarboxylation and dehydration, and resulting in closure of the quinoline ring. PqsB is probably required for the proper folding of PqsC rather than for a direct enzymatic role in the process. This Pseudomonas aeruginosa (strain ATCC 15692 / DSM 22644 / CIP 104116 / JCM 14847 / LMG 12228 / 1C / PRS 101 / PAO1) protein is 2-heptyl-4(1H)-quinolone synthase subunit PqsB.